The chain runs to 171 residues: Crossover junction endodeoxyribonuclease RuvC (171 aa).

Catalysis depends on residues aspartate 12, glutamate 72, and aspartate 144. 3 residues coordinate Mg(2+): aspartate 12, glutamate 72, and aspartate 144.

It belongs to the RuvC family. In terms of assembly, homodimer which binds Holliday junction (HJ) DNA. The HJ becomes 2-fold symmetrical on binding to RuvC with unstacked arms; it has a different conformation from HJ DNA in complex with RuvA. In the full resolvosome a probable DNA-RuvA(4)-RuvB(12)-RuvC(2) complex forms which resolves the HJ. The cofactor is Mg(2+).

It localises to the cytoplasm. The enzyme catalyses Endonucleolytic cleavage at a junction such as a reciprocal single-stranded crossover between two homologous DNA duplexes (Holliday junction).. The RuvA-RuvB-RuvC complex processes Holliday junction (HJ) DNA during genetic recombination and DNA repair. Endonuclease that resolves HJ intermediates. Cleaves cruciform DNA by making single-stranded nicks across the HJ at symmetrical positions within the homologous arms, yielding a 5'-phosphate and a 3'-hydroxyl group; requires a central core of homology in the junction. The consensus cleavage sequence is 5'-(A/T)TT(C/G)-3'. Cleavage occurs on the 3'-side of the TT dinucleotide at the point of strand exchange. HJ branch migration catalyzed by RuvA-RuvB allows RuvC to scan DNA until it finds its consensus sequence, where it cleaves and resolves the cruciform DNA. This Afipia carboxidovorans (strain ATCC 49405 / DSM 1227 / KCTC 32145 / OM5) (Oligotropha carboxidovorans) protein is Crossover junction endodeoxyribonuclease RuvC.